Here is a 376-residue protein sequence, read N- to C-terminus: Oligopeptide transport system permease protein OppC (376 aa).

The next 7 helical transmembrane spans lie at 46–66 (WAIL…IVPL), 149–169 (FPLL…WASV), 173–193 (LWIA…YGAV), 209–229 (IIEI…GATF), 242–262 (VIFT…RIYI), 297–317 (LAVV…SLVF), and 341–361 (VALI…ARTF). Residues 169 to 366 (VAKSLWIAVV…AARTFANALN (198 aa)) form the ABC transmembrane type-1 domain.

It belongs to the binding-protein-dependent transport system permease family. OppBC subfamily. In terms of assembly, the complex is composed of two ATP-binding proteins (OppD and OppF), two transmembrane proteins (OppB and OppC) and a solute-binding protein (OppA).

The protein localises to the cell membrane. Functionally, part of the ABC transporter complex OppABCDF involved in the uptake of oligopeptides. Probably responsible for the translocation of the substrate across the membrane. The protein is Oligopeptide transport system permease protein OppC (oppC) of Mycoplasma genitalium (strain ATCC 33530 / DSM 19775 / NCTC 10195 / G37) (Mycoplasmoides genitalium).